The sequence spans 179 residues: Large ribosomal subunit protein uL5 (179 aa).

It belongs to the universal ribosomal protein uL5 family. As to quaternary structure, part of the 50S ribosomal subunit; part of the 5S rRNA/L5/L18/L25 subcomplex. Contacts the 5S rRNA and the P site tRNA. Forms a bridge to the 30S subunit in the 70S ribosome.

Its function is as follows. This is one of the proteins that bind and probably mediate the attachment of the 5S RNA into the large ribosomal subunit, where it forms part of the central protuberance. In the 70S ribosome it contacts protein S13 of the 30S subunit (bridge B1b), connecting the 2 subunits; this bridge is implicated in subunit movement. Contacts the P site tRNA; the 5S rRNA and some of its associated proteins might help stabilize positioning of ribosome-bound tRNAs. The sequence is that of Large ribosomal subunit protein uL5 from Prochlorococcus marinus (strain MIT 9301).